The sequence spans 144 residues: Large ribosomal subunit protein uL15 (144 aa).

Positions 1–10 (MKLHELKPAE) are enriched in basic and acidic residues. The interval 1–52 (MKLHELKPAEGSRQVRNRVGRGTSSGNGKTAGRGQKGQKARGKVRLGFEGGQ) is disordered. Over residues 23–35 (TSSGNGKTAGRGQ) the composition is skewed to gly residues.

The protein belongs to the universal ribosomal protein uL15 family. Part of the 50S ribosomal subunit.

Functionally, binds to the 23S rRNA. The sequence is that of Large ribosomal subunit protein uL15 from Ligilactobacillus salivarius (strain UCC118) (Lactobacillus salivarius).